Reading from the N-terminus, the 347-residue chain is Lipoyl synthase (347 aa).

Residues C77, C82, C88, C103, C107, C110, and S317 each contribute to the [4Fe-4S] cluster site. Positions 89–306 constitute a Radical SAM core domain; the sequence is FADGTATFMI…MDYGKKIGFF (218 aa).

Belongs to the radical SAM superfamily. Lipoyl synthase family. [4Fe-4S] cluster is required as a cofactor.

It localises to the cytoplasm. The catalysed reaction is [[Fe-S] cluster scaffold protein carrying a second [4Fe-4S](2+) cluster] + N(6)-octanoyl-L-lysyl-[protein] + 2 oxidized [2Fe-2S]-[ferredoxin] + 2 S-adenosyl-L-methionine + 4 H(+) = [[Fe-S] cluster scaffold protein] + N(6)-[(R)-dihydrolipoyl]-L-lysyl-[protein] + 4 Fe(3+) + 2 hydrogen sulfide + 2 5'-deoxyadenosine + 2 L-methionine + 2 reduced [2Fe-2S]-[ferredoxin]. The protein operates within protein modification; protein lipoylation via endogenous pathway; protein N(6)-(lipoyl)lysine from octanoyl-[acyl-carrier-protein]: step 2/2. Its function is as follows. Catalyzes the radical-mediated insertion of two sulfur atoms into the C-6 and C-8 positions of the octanoyl moiety bound to the lipoyl domains of lipoate-dependent enzymes, thereby converting the octanoylated domains into lipoylated derivatives. This is Lipoyl synthase from Psychrobacter arcticus (strain DSM 17307 / VKM B-2377 / 273-4).